The following is a 401-amino-acid chain: Argininosuccinate synthase (401 aa).

Residue 9 to 17 (AYSGGLDTS) coordinates ATP. An L-citrulline-binding site is contributed by Tyr87. Gly117 contributes to the ATP binding site. Residues Thr119, Asn123, and Asp124 each coordinate L-aspartate. L-citrulline is bound at residue Asn123. 5 residues coordinate L-citrulline: Arg127, Ser176, Ser185, Glu261, and Tyr273.

The protein belongs to the argininosuccinate synthase family. Type 1 subfamily. In terms of assembly, homotetramer.

It is found in the cytoplasm. The enzyme catalyses L-citrulline + L-aspartate + ATP = 2-(N(omega)-L-arginino)succinate + AMP + diphosphate + H(+). The protein operates within amino-acid biosynthesis; L-arginine biosynthesis; L-arginine from L-ornithine and carbamoyl phosphate: step 2/3. In Prosthecochloris aestuarii (strain DSM 271 / SK 413), this protein is Argininosuccinate synthase.